Here is a 194-residue protein sequence, read N- to C-terminus: Adenylate kinase (194 aa).

Residue 10–15 participates in ATP binding; it reads GAGKGT. The NMP stretch occupies residues 30 to 59; it reads STGDMLRAAVAAGTPVGLKAKAVMESGGLV. AMP is bound by residues Thr-31, Arg-36, 57–59, 85–88, and Gln-92; these read GLV and GFPR. Residues 126–142 are LID; the sequence is NRAAEAKAKGEPVRKDD. Arg-127 is a binding site for ATP. Residues Arg-139 and Arg-150 each coordinate AMP. Ala-178 lines the ATP pocket.

The protein belongs to the adenylate kinase family. In terms of assembly, monomer.

It is found in the cytoplasm. It catalyses the reaction AMP + ATP = 2 ADP. It participates in purine metabolism; AMP biosynthesis via salvage pathway; AMP from ADP: step 1/1. Catalyzes the reversible transfer of the terminal phosphate group between ATP and AMP. Plays an important role in cellular energy homeostasis and in adenine nucleotide metabolism. The chain is Adenylate kinase from Azorhizobium caulinodans (strain ATCC 43989 / DSM 5975 / JCM 20966 / LMG 6465 / NBRC 14845 / NCIMB 13405 / ORS 571).